Here is a 100-residue protein sequence, read N- to C-terminus: Large ribosomal subunit protein uL23 (100 aa).

It belongs to the universal ribosomal protein uL23 family. As to quaternary structure, part of the 50S ribosomal subunit. Contacts protein L29, and trigger factor when it is bound to the ribosome.

Its function is as follows. One of the early assembly proteins it binds 23S rRNA. One of the proteins that surrounds the polypeptide exit tunnel on the outside of the ribosome. Forms the main docking site for trigger factor binding to the ribosome. The protein is Large ribosomal subunit protein uL23 of Photorhabdus laumondii subsp. laumondii (strain DSM 15139 / CIP 105565 / TT01) (Photorhabdus luminescens subsp. laumondii).